A 375-amino-acid chain; its full sequence is MASCTLLAVLVFLCAIVSCFSDNPIDSCWRGDANWDQNRMKLADCAVGFGSSAMGGKGGAFYTVTSSDDDPVNPAPGTLRYGATRERSLWIIFSKNLNIKLNMPLYIAGNKTIDGRGAEVHIGNGGPCLFMRTVSHVILHGLNIHGCNTSVSGNVLISEASGVVPVHAQDGDAITMRNVTDVWIDHNSLSDSSDGLVDVTLASTGVTISNNHFFNHHKVMLLGHSDIYSDDKSMKVTVAFNQFGPNAGQRMPRARYGLIHVANNNYDPWSIYAIGGSSNPTILSEGNSFTAPNDSDKKEVTRRVGCESPSTCANWVWRSTQDSFNNGAYFVSSGKNEGTNIYNNNEAFKVENGSAAPQLTKNAGVLTCILSKPCS.

A signal peptide spans 1-21; the sequence is MASCTLLAVLVFLCAIVSCFS. Cys-28 and Cys-45 form a disulfide bridge. Asn-110 is a glycosylation site (N-linked (GlcNAc...) asparagine). Cys-128 and Cys-147 are joined by a disulfide. N-linked (GlcNAc...) asparagine glycosylation is present at Asn-148. Ca(2+) is bound at residue Asp-170. Asn-178 is a glycosylation site (N-linked (GlcNAc...) asparagine). Ca(2+) is bound by residues Asp-194 and Asp-198. Arg-250 is a catalytic residue. A glycan (N-linked (GlcNAc...) asparagine) is linked at Asn-293. An intrachain disulfide couples Cys-306 to Cys-312. Asn-352 carries N-linked (GlcNAc...) asparagine glycosylation.

The protein belongs to the polysaccharide lyase 1 family. Amb a subfamily. Ca(2+) serves as cofactor.

It catalyses the reaction Eliminative cleavage of (1-&gt;4)-alpha-D-galacturonan to give oligosaccharides with 4-deoxy-alpha-D-galact-4-enuronosyl groups at their non-reducing ends.. Its pathway is glycan metabolism; pectin degradation; 2-dehydro-3-deoxy-D-gluconate from pectin: step 2/5. In terms of biological role, has pectate lyase activity. The protein is Pectate lyase 1 of Chamaecyparis obtusa (Hinoki false-cypress).